The primary structure comprises 250 residues: Proteasome subunit alpha type-7-A (250 aa).

K62 is covalently cross-linked (Glycyl lysine isopeptide (Lys-Gly) (interchain with G-Cter in ubiquitin)).

It belongs to the peptidase T1A family. Component of the 20S core complex of the 26S proteasome. The 26S proteasome is composed of a core protease (CP), known as the 20S proteasome, capped at one or both ends by the 19S regulatory particle (RP/PA700). The 20S proteasome core is composed of 28 subunits that are arranged in four stacked rings, resulting in a barrel-shaped structure. The two end rings are each formed by seven alpha subunits, and the two central rings are each formed by seven beta subunits. The catalytic chamber with the active sites is on the inside of the barrel. Interacts with KIN10 and KIN11 SnRK subunits, and with the SKP1A/ASK1 subunit of the SCF E3 ubiquitin ligase complex. Expressed in roots, leaves and flowers.

It localises to the cytoplasm. It is found in the nucleus. The proteasome is a multicatalytic proteinase complex which is characterized by its ability to cleave peptides with Arg, Phe, Tyr, Leu, and Glu adjacent to the leaving group at neutral or slightly basic pH. The proteasome has an ATP-dependent proteolytic activity. Mediates the association of the SCF(TIR1) E3 ubiquitin ligase complex with the proteasome. This Arabidopsis thaliana (Mouse-ear cress) protein is Proteasome subunit alpha type-7-A (PAD1).